We begin with the raw amino-acid sequence, 78 residues long: Hainantoxin-XX.3 (78 aa).

The signal sequence occupies residues 1–23; sequence MKSATLLALSFLLIASCFLICEA. Residues 24-47 constitute a propeptide that is removed on maturation; that stretch reads EHSRYEEHEILEENMGDVVNLEQR. 3 cysteine pairs are disulfide-bonded: C49/C62, C56/C66, and C61/C77.

Belongs to the hainantoxin family. 20 subfamily. Expressed by the venom gland.

The protein resides in the secreted. Putative ion channel inhibitor. The protein is Hainantoxin-XX.3 of Cyriopagopus hainanus (Chinese bird spider).